A 494-amino-acid chain; its full sequence is Anaerobic nitric oxide reductase flavorubredoxin (494 aa).

The interval 30 to 210 (TKGTSYNSYL…PFSALVTAKI (181 aa)) is zinc metallo-hydrolase. Positions 79, 81, 83, 147, 166, and 227 each coordinate Fe cation. The 140-residue stretch at 254–393 (ITIFYDSMSN…ECREHGQQIA (140 aa)) folds into the Flavodoxin-like domain. FMN contacts are provided by residues 260 to 264 (SMSNN) and 342 to 369 (AFGS…ETAI). A Rubredoxin-like domain is found at 441-492 (CQCMVCTVCNWVYDPAKGEPNQGIEVGTTWADVPDYFLCPECHLGKDVFVEY). Cys446, Cys449, Cys479, and Cys482 together coordinate Fe cation.

It in the N-terminal section; belongs to the zinc metallo-hydrolase group 3 family. In terms of assembly, homotetramer. The cofactor is Fe cation. It depends on FMN as a cofactor.

The protein localises to the cytoplasm. The protein operates within nitrogen metabolism; nitric oxide reduction. Anaerobic nitric oxide reductase; uses NADH to detoxify nitric oxide (NO), protecting several 4Fe-4S NO-sensitive enzymes. Has at least 2 reductase partners, only one of which (NorW, flavorubredoxin reductase) has been identified. NO probably binds to the di-iron center; electrons enter from the NorW at rubredoxin and are transferred sequentially to the FMN center and the di-iron center. Also able to function as an aerobic oxygen reductase. This chain is Anaerobic nitric oxide reductase flavorubredoxin, found in Vibrio vulnificus (strain YJ016).